Here is a 384-residue protein sequence, read N- to C-terminus: S-adenosylmethionine synthase (384 aa).

His16 serves as a coordination point for ATP. Residue Asp18 coordinates Mg(2+). A K(+)-binding site is contributed by Glu44. Residues Glu57 and Gln100 each coordinate L-methionine. The tract at residues 100–110 (QSADIAMGVDE) is flexible loop. Residues 165–167 (DAK), Asp240, 246–247 (RK), Ala263, and Lys267 each bind ATP. Asp240 is a binding site for L-methionine. Lys271 lines the L-methionine pocket.

Belongs to the AdoMet synthase family. As to quaternary structure, homotetramer; dimer of dimers. Requires Mg(2+) as cofactor. K(+) is required as a cofactor.

Its subcellular location is the cytoplasm. It carries out the reaction L-methionine + ATP + H2O = S-adenosyl-L-methionine + phosphate + diphosphate. Its pathway is amino-acid biosynthesis; S-adenosyl-L-methionine biosynthesis; S-adenosyl-L-methionine from L-methionine: step 1/1. In terms of biological role, catalyzes the formation of S-adenosylmethionine (AdoMet) from methionine and ATP. The overall synthetic reaction is composed of two sequential steps, AdoMet formation and the subsequent tripolyphosphate hydrolysis which occurs prior to release of AdoMet from the enzyme. The sequence is that of S-adenosylmethionine synthase from Teredinibacter turnerae (strain ATCC 39867 / T7901).